The chain runs to 320 residues: Biotin synthase (320 aa).

The 228-residue stretch at 43–270 folds into the Radical SAM core domain; sequence GAVQKSQLLS…KSWVRLSAGR (228 aa). [4Fe-4S] cluster is bound by residues Cys-58, Cys-62, and Cys-65. Positions 102, 133, 193, and 265 each coordinate [2Fe-2S] cluster.

This sequence belongs to the radical SAM superfamily. Biotin synthase family. Homodimer. [4Fe-4S] cluster serves as cofactor. [2Fe-2S] cluster is required as a cofactor.

It carries out the reaction (4R,5S)-dethiobiotin + (sulfur carrier)-SH + 2 reduced [2Fe-2S]-[ferredoxin] + 2 S-adenosyl-L-methionine = (sulfur carrier)-H + biotin + 2 5'-deoxyadenosine + 2 L-methionine + 2 oxidized [2Fe-2S]-[ferredoxin]. The protein operates within cofactor biosynthesis; biotin biosynthesis; biotin from 7,8-diaminononanoate: step 2/2. In terms of biological role, catalyzes the conversion of dethiobiotin (DTB) to biotin by the insertion of a sulfur atom into dethiobiotin via a radical-based mechanism. The polypeptide is Biotin synthase (Hyphomonas neptunium (strain ATCC 15444)).